The chain runs to 835 residues: Ubiquitin carboxyl-terminal hydrolase 26 (835 aa).

Positions serine 102–serine 128 are disordered. A compositionally biased stretch (polar residues) spans proline 118–serine 128. A USP domain is found at glutamine 286 to asparagine 816. Cysteine 295 serves as the catalytic Nucleophile. The interval asparagine 597–asparagine 747 is disordered. 2 stretches are compositionally biased toward basic and acidic residues: residues leucine 634 to aspartate 652 and lysine 669 to isoleucine 679. Residues alanine 683–threonine 708 show a composition bias toward polar residues. Residues glutamine 709 to serine 725 are compositionally biased toward low complexity. The span at arginine 726–asparagine 747 shows a compositional bias: basic and acidic residues. The Proton acceptor role is filled by histidine 771.

The protein belongs to the peptidase C19 family. As to quaternary structure, interacts with RING1.

It localises to the nucleus. The protein resides in the cytoplasm. The protein localises to the cytoskeleton. Its subcellular location is the flagellum axoneme. The enzyme catalyses Thiol-dependent hydrolysis of ester, thioester, amide, peptide and isopeptide bonds formed by the C-terminal Gly of ubiquitin (a 76-residue protein attached to proteins as an intracellular targeting signal).. Its function is as follows. Deubiquitinase regulating several biological processes through the deubiquitination of components of these processes. Involved in somatic cell reprogramming through the 'Lys-48'-linked deubiquitination and stabilization of CBX4 and CBX6, two components of the polycomb-repressive complex 1 (PRC1). Also deubiquitinates and probably stabilizes the androgen receptor (AR), regulating the androgen receptor signaling pathway. May play a role in spermatogenesis. The sequence is that of Ubiquitin carboxyl-terminal hydrolase 26 from Mus musculus (Mouse).